A 178-amino-acid chain; its full sequence is Large ribosomal subunit protein uL6 (178 aa).

This sequence belongs to the universal ribosomal protein uL6 family. In terms of assembly, part of the 50S ribosomal subunit.

This protein binds to the 23S rRNA, and is important in its secondary structure. It is located near the subunit interface in the base of the L7/L12 stalk, and near the tRNA binding site of the peptidyltransferase center. This chain is Large ribosomal subunit protein uL6, found in Helicobacter pylori (strain P12).